Reading from the N-terminus, the 338-residue chain is Ferredoxin--NADP reductase (338 aa).

FAD is bound by residues threonine 14, aspartate 33, glutamine 41, tyrosine 46, valine 86, phenylalanine 120, aspartate 284, and threonine 325.

Belongs to the ferredoxin--NADP reductase type 2 family. In terms of assembly, homodimer. FAD serves as cofactor.

The catalysed reaction is 2 reduced [2Fe-2S]-[ferredoxin] + NADP(+) + H(+) = 2 oxidized [2Fe-2S]-[ferredoxin] + NADPH. The chain is Ferredoxin--NADP reductase from Pelagibacter ubique (strain HTCC1062).